A 270-amino-acid chain; its full sequence is MGVSMITIVTLLDECDRLPGRSRDAASTLWIFLIKQCMEQIQDDVGVPIIVRAADLFRFAKPMLILPRQHRPIVRTKPPDGTGVRGTGLAGTRDSFIVRLFEDVAGCSTEWQDVLSGYLMLESEVSGNAPHSLWIVGAADICRIALECIPLPKRLLAIKVSGTWSGMPWAIPDNIQTLLTSTWEPKFDTPEDRAHFCDSDMVCVYKILGSPPNPLKPPEIEPPQMSSTPGRLFCCGKCCKKEDRDAIAIPVRYTATGKSRIQKKCRAGSH.

It belongs to the herpesviridae US2 family.

This chain is Protein US2 homolog (MDV091), found in Gallid herpesvirus 2 (strain Chicken/Md5/ATCC VR-987) (GaHV-2).